Reading from the N-terminus, the 393-residue chain is Lipid-A-disaccharide synthase (393 aa).

The protein belongs to the LpxB family.

The catalysed reaction is a lipid X + a UDP-2-N,3-O-bis[(3R)-3-hydroxyacyl]-alpha-D-glucosamine = a lipid A disaccharide + UDP + H(+). It functions in the pathway bacterial outer membrane biogenesis; LPS lipid A biosynthesis. Functionally, condensation of UDP-2,3-diacylglucosamine and 2,3-diacylglucosamine-1-phosphate to form lipid A disaccharide, a precursor of lipid A, a phosphorylated glycolipid that anchors the lipopolysaccharide to the outer membrane of the cell. This chain is Lipid-A-disaccharide synthase, found in Bordetella pertussis (strain Tohama I / ATCC BAA-589 / NCTC 13251).